A 213-amino-acid polypeptide reads, in one-letter code: Orotate phosphoribosyltransferase (213 aa).

Position 26 (K26) interacts with 5-phospho-alpha-D-ribose 1-diphosphate. Orotate is bound at residue 34 to 35 (FF). 5-phospho-alpha-D-ribose 1-diphosphate contacts are provided by residues 72 to 73 (YK), R99, K100, K103, H105, and 124 to 132 (DDVITAGTA). 2 residues coordinate orotate: T128 and R156.

This sequence belongs to the purine/pyrimidine phosphoribosyltransferase family. PyrE subfamily. Homodimer. Requires Mg(2+) as cofactor.

It catalyses the reaction orotidine 5'-phosphate + diphosphate = orotate + 5-phospho-alpha-D-ribose 1-diphosphate. Its pathway is pyrimidine metabolism; UMP biosynthesis via de novo pathway; UMP from orotate: step 1/2. Catalyzes the transfer of a ribosyl phosphate group from 5-phosphoribose 1-diphosphate to orotate, leading to the formation of orotidine monophosphate (OMP). The protein is Orotate phosphoribosyltransferase of Cronobacter sakazakii (strain ATCC BAA-894) (Enterobacter sakazakii).